We begin with the raw amino-acid sequence, 156 residues long: Small ribosomal subunit protein uS7 (156 aa).

The protein belongs to the universal ribosomal protein uS7 family. In terms of assembly, part of the 30S ribosomal subunit. Contacts proteins S9 and S11.

Functionally, one of the primary rRNA binding proteins, it binds directly to 16S rRNA where it nucleates assembly of the head domain of the 30S subunit. Is located at the subunit interface close to the decoding center, probably blocks exit of the E-site tRNA. This Pseudomonas syringae pv. syringae (strain B728a) protein is Small ribosomal subunit protein uS7.